The sequence spans 141 residues: Acetyltransferase ECA0875 (141 aa).

The region spanning 1 to 141 (MEIRIFRQDD…GKRLIEDREY (141 aa)) is the N-acetyltransferase domain.

It belongs to the acetyltransferase family. YpeA subfamily.

The polypeptide is Acetyltransferase ECA0875 (Pectobacterium atrosepticum (strain SCRI 1043 / ATCC BAA-672) (Erwinia carotovora subsp. atroseptica)).